Here is a 922-residue protein sequence, read N- to C-terminus: Disintegrin and metalloproteinase domain-containing protein 10 homolog (922 aa).

A signal peptide spans 1–26; the sequence is MSSPIRNRLQLVVTLIFCLFFENVNG. The propeptide occupies 27-228; sequence LNNFIDNFET…YMTMGGRSKR (202 aa). 3 N-linked (GlcNAc...) asparagine glycosylation sites follow: asparagine 74, asparagine 185, and asparagine 346. Over 229-745 the chain is Extracellular; the sequence is ANTLRDHDGL…ETLTQWAQDN (517 aa). One can recognise a Peptidase M12B domain in the interval 242–480; that stretch reads RTCSLYMQAD…CSVKNISAVL (239 aa). Histidine 426 serves as a coordination point for Zn(2+). Glutamate 427 is a catalytic residue. 2 residues coordinate Zn(2+): histidine 430 and histidine 436. Cysteines 442 and 471 form a disulfide. N-linked (GlcNAc...) asparagine glycosylation occurs at asparagine 475. Residues 511 to 615 enclose the Disintegrin domain; that stretch reads SAFCGNQIYE…QCPVSPPKHD (105 aa). 5 disulfides stabilise this stretch: cysteine 542–cysteine 577, cysteine 564–cysteine 572, cysteine 588–cysteine 607, cysteine 594–cysteine 626, and cysteine 619–cysteine 631. A glycan (N-linked (GlcNAc...) asparagine) is linked at asparagine 632. 4 cysteine pairs are disulfide-bonded: cysteine 636-cysteine 659, cysteine 644-cysteine 665, cysteine 655-cysteine 707, and cysteine 700-cysteine 713. The N-linked (GlcNAc...) asparagine glycan is linked to asparagine 677. A helical transmembrane segment spans residues 746–766; the sequence is WWVVGVGGLVFLVIMALFVKC. Topologically, residues 767–922 are cytoplasmic; that stretch reads CAVHTPSTNP…SGNGGKKKGK (156 aa). Disordered regions lie at residues 797 to 837 and 864 to 922; these read QHRQ…PSAP and PGSS…KKGK. The segment covering 805–834 has biased composition (low complexity); the sequence is AAGSVPPGPGAQPRSGAASAPSRTTPSARP.

As to quaternary structure, may interact with tetraspanin tsp-12; the interaction promotes sup-17 cell membrane localization. Requires Zn(2+) as cofactor. Expressed in the germline.

The protein resides in the cell membrane. It localises to the basolateral cell membrane. The protein localises to the cytoplasmic vesicle membrane. The enzyme catalyses Endopeptidase of broad specificity.. Metalloprotease. Acts together with protease adm-4 and in a cell autonomous manner to facilitate lin-12/Notch signaling during developmental cell fate decision, including anchor cell/ventral uterine precursor cell decision and vulva precursor cell specification. By modulating glp-1/Notch signaling, plays a role in germline development. Probably by modulating BMP-like Sma/Mab signaling via the shedding of unc-40 ectodomain, involved in the regulation of body size and mesoderm development. Probably by shedding ephrin efn-4, regulates axon guidance of SDQL neuron during development. The sequence is that of Disintegrin and metalloproteinase domain-containing protein 10 homolog from Caenorhabditis elegans.